The following is a 556-amino-acid chain: Insulin-like growth factor 2 mRNA-binding protein 2 (556 aa).

2 consecutive RRM domains span residues 3-76 (NKLY…YSVS) and 82-157 (RKIQ…YIPD). Serine 11 carries the phosphoserine modification. Positions 156 to 188 (PDEEVSSPSPPQRAQRGDHSSREQGHAPGGTSQ) are disordered. Phosphoserine occurs at positions 162 and 164. A compositionally biased stretch (basic and acidic residues) spans 170-180 (QRGDHSSREQG). KH domains are found at residues 193 to 258 (DFPL…CRMI), 274 to 341 (EIPL…EIEI), 384 to 449 (QEIV…QGRI), and 466 to 532 (KLEA…QRKI). Threonine 507 carries the phosphothreonine modification.

It belongs to the RRM IMP/VICKZ family. As to quaternary structure, can form homooligomers and heterooligomers with IGF2BP1 and IGF2BP3 in an RNA-dependent manner. Interacts with HNRPD. Interacts with IGF2BP1. Interacts with ELAVL1, DHX9, HNRNPU, MATR3 and PABPC1.

The protein resides in the nucleus. The protein localises to the cytoplasm. It localises to the P-body. It is found in the stress granule. In terms of biological role, RNA-binding factor that recruits target transcripts to cytoplasmic protein-RNA complexes (mRNPs). This transcript 'caging' into mRNPs allows mRNA transport and transient storage. It also modulates the rate and location at which target transcripts encounter the translational apparatus and shields them from endonuclease attacks or microRNA-mediated degradation. Preferentially binds to N6-methyladenosine (m6A)-containing mRNAs and increases their stability. Binds to the 5'-UTR of the insulin-like growth factor 2 (IGF2) mRNAs. Binding is isoform-specific. Binds to beta-actin/ACTB and MYC transcripts. Increases MYC mRNA stability by binding to the coding region instability determinant (CRD) and binding is enhanced by m6A-modification of the CRD. In Pongo abelii (Sumatran orangutan), this protein is Insulin-like growth factor 2 mRNA-binding protein 2 (IGF2BP2).